A 355-amino-acid chain; its full sequence is UDP-N-acetylglucosamine--N-acetylmuramyl-(pentapeptide) pyrophosphoryl-undecaprenol N-acetylglucosamine transferase (355 aa).

UDP-N-acetyl-alpha-D-glucosamine contacts are provided by residues 11-13 (TAG), Arg164, Ser194, and Gln289.

This sequence belongs to the glycosyltransferase 28 family. MurG subfamily.

The protein resides in the cell membrane. It catalyses the reaction di-trans,octa-cis-undecaprenyl diphospho-N-acetyl-alpha-D-muramoyl-L-alanyl-D-glutamyl-meso-2,6-diaminopimeloyl-D-alanyl-D-alanine + UDP-N-acetyl-alpha-D-glucosamine = di-trans,octa-cis-undecaprenyl diphospho-[N-acetyl-alpha-D-glucosaminyl-(1-&gt;4)]-N-acetyl-alpha-D-muramoyl-L-alanyl-D-glutamyl-meso-2,6-diaminopimeloyl-D-alanyl-D-alanine + UDP + H(+). The protein operates within cell wall biogenesis; peptidoglycan biosynthesis. Functionally, cell wall formation. Catalyzes the transfer of a GlcNAc subunit on undecaprenyl-pyrophosphoryl-MurNAc-pentapeptide (lipid intermediate I) to form undecaprenyl-pyrophosphoryl-MurNAc-(pentapeptide)GlcNAc (lipid intermediate II). The polypeptide is UDP-N-acetylglucosamine--N-acetylmuramyl-(pentapeptide) pyrophosphoryl-undecaprenol N-acetylglucosamine transferase (Lachnoclostridium phytofermentans (strain ATCC 700394 / DSM 18823 / ISDg) (Clostridium phytofermentans)).